The following is a 468-amino-acid chain: Plant UBX domain-containing protein 7 (468 aa).

Methionine 1 carries the N-acetylmethionine modification. Residues 7 to 48 (SGDQQRLVSSFLEIAVGQTAETARQFLQATSWKLEEAIQLFY) form the UBA-like domain. Disordered regions lie at residues 138 to 168 (KSPGIWEPDEGDSSASASASASASESASAPR) and 299 to 329 (HFASLSKKRPRGSFSLTPHSKPKEDVAKDEE). Positions 150–166 (SSASASASASASESASA) are enriched in low complexity. The UIM domain occupies 328-347 (EEEEELQRALAASLEDNNMK). A UBX domain is found at 385–466 (DRSLQCRVGI…GVANSMISAT (82 aa)).

In terms of assembly, interacts with CDC48A via its UBX domain and with ubiquitin via its N-terminal UBA-like domain. As to expression, expressed broadly in sporophyte and gametophyte cells.

Its subcellular location is the nucleus. Functionally, acts as a bridge between CDC48A and ubiquitin, suggesting a role in targeted protein degradation. The sequence is that of Plant UBX domain-containing protein 7 from Arabidopsis thaliana (Mouse-ear cress).